Here is a 327-residue protein sequence, read N- to C-terminus: GTPase Obg (327 aa).

An Obg domain is found at 2-160; that stretch reads HLFKDSLNLI…LNLRLELSLI (159 aa). In terms of domain architecture, OBG-type G spans 161 to 326; it reads ADIGLVGLPN…LVSEFFSLVK (166 aa). GTP contacts are provided by residues 167 to 174, 192 to 196, 213 to 216, 280 to 283, and 307 to 309; these read GLPNAGKS, FTTKI, DLPG, SKLD, and SIY. Serine 174 and threonine 194 together coordinate Mg(2+).

The protein belongs to the TRAFAC class OBG-HflX-like GTPase superfamily. OBG GTPase family. In terms of assembly, monomer. Requires Mg(2+) as cofactor.

The protein resides in the cytoplasm. An essential GTPase which binds GTP, GDP and possibly (p)ppGpp with moderate affinity, with high nucleotide exchange rates and a fairly low GTP hydrolysis rate. Plays a role in control of the cell cycle, stress response, ribosome biogenesis and in those bacteria that undergo differentiation, in morphogenesis control. This Borrelia duttonii (strain Ly) protein is GTPase Obg.